Consider the following 252-residue polypeptide: Transcriptional regulatory protein HptR (252 aa).

A Response regulatory domain is found at 3-118 (KVVICDDERI…QLEVILGRLV (116 aa)). 4-aspartylphosphate is present on Asp-55. An HTH araC/xylS-type domain is found at 153–250 (NQIVDQIKQS…QMSPSDYCKQ (98 aa)). 2 consecutive DNA-binding regions (H-T-H motif) follow at residues 170–191 (SDLIQHIDVSESYAMRTFKDHV) and 217–240 (HYEIADKVGFSEYKMFSYHFKKYL).

Phosphorylated by HptS.

The protein resides in the cytoplasm. Its function is as follows. Member of the two-component regulatory system HptS/HptR that regulates genes involved in hexose phosphate transport system in response to changes in extracellular phosphate sources. Activates uhpT expression to facilitate glucose-6-phosphate/G6P utilization by directly binding to its promoter. Antagonizes CcpA-dependent transcription of a subset of CcpA-regulated genes involved in antibiotic susceptibility. The protein is Transcriptional regulatory protein HptR (hptR) of Staphylococcus aureus (strain MRSA252).